Consider the following 91-residue polypeptide: DNA-binding protein HU-beta 2 (91 aa).

Belongs to the bacterial histone-like protein family.

In terms of biological role, histone-like DNA-binding protein which is capable of wrapping DNA to stabilize it, and thus to prevent its denaturation under extreme environmental conditions. This chain is DNA-binding protein HU-beta 2 (hupB2), found in Neisseria meningitidis serogroup A / serotype 4A (strain DSM 15465 / Z2491).